A 349-amino-acid chain; its full sequence is Twinfilin-2 (349 aa).

2 consecutive ADF-H domains span residues 4–139 (QTGI…KHVS) and 177–313 (GLAF…DEVH). A disordered region spans residues 324-349 (AKPKGPVGKRGQKRLIKGPGENGEDS).

This sequence belongs to the actin-binding proteins ADF family. Twinfilin subfamily. Interacts with G-actin; ADP-actin form and capping protein (CP).

It localises to the cytoplasm. The protein resides in the cytoskeleton. The protein localises to the perinuclear region. Its function is as follows. Actin-binding protein involved in motile and morphological processes. Inhibits actin polymerization, likely by sequestering G-actin. The polypeptide is Twinfilin-2 (TWF2) (Gallus gallus (Chicken)).